A 592-amino-acid polypeptide reads, in one-letter code: Cytosolic purine 5'-nucleotidase (592 aa).

Residues 1 to 15 (MAENNNNNNNNNNNN) show a composition bias toward low complexity. The interval 1–37 (MAENNNNNNNNNNNNVSTPPHQKPHLTTGLRTSSSGL) is disordered. The active-site Nucleophile is Asp-122. IMP contacts are provided by Asp-122 and Asp-124. Residues Asp-122 and Asp-124 each contribute to the Mg(2+) site. Residue Asp-124 is the Proton donor of the active site. Asn-226 lines the ATP pocket. The segment at 252 to 273 (LTEEVADEQQQMNSPPLSSLGS) is disordered. A compositionally biased stretch (polar residues) spans 259-273 (EQQQMNSPPLSSLGS). 7 residues coordinate IMP: Arg-299, Asp-303, Lys-312, Thr-347, Asn-348, Ser-349, and Lys-385. Asp-444 is a Mg(2+) binding site. ATP is bound by residues Gln-547 and Arg-550.

This sequence belongs to the 5'(3')-deoxyribonucleotidase family. In terms of assembly, homotetramer. The cofactor is Mg(2+).

Its subcellular location is the cytoplasm. The protein localises to the cytosol. The catalysed reaction is a ribonucleoside 5'-phosphate + H2O = a ribonucleoside + phosphate. It catalyses the reaction a 2'-deoxyribonucleoside + a ribonucleoside 5'-phosphate = a ribonucleoside + a 2'-deoxyribonucleoside 5'-phosphate. Its function is as follows. Broad specificity cytosolic 5'-nucleotidase that catalyzes the dephosphorylation of 6-hydroxypurine nucleoside 5'-monophosphates. In addition, possesses a phosphotransferase activity by which it can transfer a phosphate from a donor nucleoside monophosphate to an acceptor nucleoside. Through these activities regulates the purine nucleoside/nucleotide pools within the cell. The chain is Cytosolic purine 5'-nucleotidase (nt5c2) from Dictyostelium discoideum (Social amoeba).